Reading from the N-terminus, the 576-residue chain is MDAKTFDKSKLPSRHVTVGPERAPHRSYYYAMGLTEEEINQPFVGVATCWNEAAPCNIALMRQAQSVKKGVKAAAGTPREFCTITVTDGIAMGHQGMKSSLASRDVIADSVELTMRGHCYDALVGLAGCDKSLPGMMMSMVRLNVPSVFMYGGSILPGHFKGKDVTVVDVFEAVGQHSAGNMEDEELHALECVACPSAGACGGQFTANTMACVSEAMGLALPGSAGAPAPYESRDEYAEASGRAVMHLLANNIRPRDIVTRKALENAAVIVAATGGSTNGGLHLPAIAHEAGIDFDLMEVAEIFKKTPYITDLKPGGNYVAKDLHEAGGVSMVLKVLLDGGYLHGDCLTVTGQSLADNLKDVKFNPDQKVVYPLSNPLSPTGGVVGLQGSLAPDGAIVKVAGMEKDHLRFSGPARCFDSEEECFEAVDKRQYKEGEVLVIRYEGPKGGPGMREMLSTTAALYGQGMGDKVALITDGRFSGGTRGFCIGHVGPEAAVGGPIALIEDGDIITIDAENGTIDLEVDEAVLEKRRANWKPRETMYASGALWKYAQLVGTARKGAVTHPGGKAEKHVYADI.

[2Fe-2S] cluster is bound at residue Cys-56. Asp-88 provides a ligand contact to Mg(2+). Cys-129 contributes to the [2Fe-2S] cluster binding site. Residues Asp-130 and Lys-131 each coordinate Mg(2+). Lys-131 is modified (N6-carboxylysine). Position 201 (Cys-201) interacts with [2Fe-2S] cluster. Position 453 (Glu-453) interacts with Mg(2+). The active-site Proton acceptor is the Ser-479.

The protein belongs to the IlvD/Edd family. Homodimer. [2Fe-2S] cluster is required as a cofactor. The cofactor is Mg(2+).

The catalysed reaction is (2R)-2,3-dihydroxy-3-methylbutanoate = 3-methyl-2-oxobutanoate + H2O. It carries out the reaction (2R,3R)-2,3-dihydroxy-3-methylpentanoate = (S)-3-methyl-2-oxopentanoate + H2O. It functions in the pathway amino-acid biosynthesis; L-isoleucine biosynthesis; L-isoleucine from 2-oxobutanoate: step 3/4. It participates in amino-acid biosynthesis; L-valine biosynthesis; L-valine from pyruvate: step 3/4. Functionally, functions in the biosynthesis of branched-chain amino acids. Catalyzes the dehydration of (2R,3R)-2,3-dihydroxy-3-methylpentanoate (2,3-dihydroxy-3-methylvalerate) into 2-oxo-3-methylpentanoate (2-oxo-3-methylvalerate) and of (2R)-2,3-dihydroxy-3-methylbutanoate (2,3-dihydroxyisovalerate) into 2-oxo-3-methylbutanoate (2-oxoisovalerate), the penultimate precursor to L-isoleucine and L-valine, respectively. This is Dihydroxy-acid dehydratase from Parvibaculum lavamentivorans (strain DS-1 / DSM 13023 / NCIMB 13966).